A 1304-amino-acid polypeptide reads, in one-letter code: DNA-directed RNA polymerase subunit beta' (1304 aa).

The segment at methionine 1–alanine 23 is disordered. The Zn(2+) site is built by cysteine 241, cysteine 315, cysteine 322, and cysteine 325. Over residues alanine 1256–proline 1268 the composition is skewed to acidic residues. Residues alanine 1256–glutamate 1304 are disordered. Positions alanine 1269–leucine 1278 are enriched in low complexity. The span at aspartate 1294–glutamate 1304 shows a compositional bias: acidic residues.

The protein belongs to the RNA polymerase beta' chain family. RpoC2 subfamily. In terms of assembly, in cyanobacteria the RNAP catalytic core is composed of 2 alpha, 1 beta, 1 beta', 1 gamma and 1 omega subunit. When a sigma factor is associated with the core the holoenzyme is formed, which can initiate transcription. Requires Zn(2+) as cofactor.

It catalyses the reaction RNA(n) + a ribonucleoside 5'-triphosphate = RNA(n+1) + diphosphate. DNA-dependent RNA polymerase catalyzes the transcription of DNA into RNA using the four ribonucleoside triphosphates as substrates. The protein is DNA-directed RNA polymerase subunit beta' of Synechococcus sp. (strain JA-2-3B'a(2-13)) (Cyanobacteria bacterium Yellowstone B-Prime).